A 1343-amino-acid chain; its full sequence is DNA-directed RNA polymerase subunit beta (1343 aa).

The protein belongs to the RNA polymerase beta chain family. In terms of assembly, the RNAP catalytic core consists of 2 alpha, 1 beta, 1 beta' and 1 omega subunit. When a sigma factor is associated with the core the holoenzyme is formed, which can initiate transcription.

The catalysed reaction is RNA(n) + a ribonucleoside 5'-triphosphate = RNA(n+1) + diphosphate. Functionally, DNA-dependent RNA polymerase catalyzes the transcription of DNA into RNA using the four ribonucleoside triphosphates as substrates. The sequence is that of DNA-directed RNA polymerase subunit beta from Shewanella sp. (strain W3-18-1).